The chain runs to 1379 residues: ATPase histone chaperone YTA7 (1379 aa).

2 disordered regions span residues 1-39 (MARN…TTTR) and 54-243 (DFLE…NSRN). Ala-2 carries the N-acetylalanine modification. Phosphoserine is present on residues Ser-11 and Ser-17. Over residues 61–78 (VMDKDETPVDVTSDEHHN) the composition is skewed to basic and acidic residues. Ser-94 is modified (phosphoserine). The segment covering 97–110 (ENARTNEELTNERN) has biased composition (basic and acidic residues). Composition is skewed to acidic residues over residues 119-152 (PEED…DEDS) and 170-184 (DPDD…DEEG). Basic residues predominate over residues 192-207 (SSKRLKRANSRRTRSS). Phosphothreonine is present on Thr-212. Positions 218-228 (RALRSRTRHSR) are enriched in basic residues. Phosphothreonine is present on Thr-229. Phosphoserine occurs at positions 241, 259, and 285. The disordered stretch occupies residues 302–330 (NPSPARRGRGGWNASQNSGPTRRLFPTGG). Ser-367, Ser-369, and Ser-370 each carry phosphoserine. The segment at 375-396 (LPLGVTPKTKKENTQKKKKKKP) is disordered. Residues 450–578 (VLFHGPPGTG…PALRRPGRFD (129 aa)) are AAA-ATPase; required for its chromatin boundary function. Position 454–461 (454–461 (GPPGTGKT)) interacts with ATP. Phosphoserine is present on Ser-735. One can recognise a Bromo domain in the interval 974–1101 (RLKNVLKIKL…ANAQMGIEEI (128 aa)). Ser-1142 bears the Phosphoserine mark. Disordered stretches follow at residues 1233 to 1274 (TCTS…ANTN) and 1291 to 1316 (LHET…GKKS). A compositionally biased stretch (basic and acidic residues) spans 1244 to 1254 (ERARKEPKENE). Ser-1256 is subject to Phosphoserine. Residues 1256-1274 (SLQTQVTEENFSKIDANTN) are compositionally biased toward polar residues. Over residues 1293-1316 (ETVEKRERSPIPKEVVEPEQGKKS) the composition is skewed to basic and acidic residues.

Belongs to the AAA ATPase family. Interacts with CSE4/CENP-A. Interacts with SCM3. Interacts with SPT16. Interacts with POB3. Interacts with the casein kinase II complex subunits CKA1, CKA2, CKB1 and CKB2. Interacts with RNA polymerase II. Interacts (via Bromo domain) with histone H3. Interacts (via Bromo domain) with histone H4. In terms of processing, phosphorylated by CDK1 and casein kinase II during S-phase, which leads to its eviction from histone gene promoters and promotes histone gene transcription.

The protein resides in the chromosome. It is found in the centromere. It localises to the nucleus. Functionally, functions as an ATP-dependent nucleosome disassembly factor that helps evict canonical histone H3 from the 5'-end of genes upon their induction. Also contributes to kinetochore assembly by cooperating with SCM3 to load the histone H3 variant CSE4/CENP-A at centromeres. Provides a chromatin boundary function at the 5'-end of genes that restricts access by RTT106 and thus prevents ectopic spreading of repressive chromatin into coding regions. Also prevents heterochromatin spreading downstream of the silent mating-type locus HMR, this function is independent of the tRNA boundary element. Contributes to appropriate cell cycle regulation of histone gene expression by recruiting RNA polymerase II to histone genes, and subsequent CDK1- and casein kinase II-dependent eviction from chromatin is required to promote transcriptional elongation. The polypeptide is ATPase histone chaperone YTA7 (Saccharomyces cerevisiae (strain ATCC 204508 / S288c) (Baker's yeast)).